The sequence spans 76 residues: MAVEKFETALKKLEEVVKKLEGGELPLEDSLKAFEEGVKQAAFCSKKLNEAEKRVELLLKQKDGSFAREEFRLDDE.

The protein belongs to the XseB family. As to quaternary structure, heterooligomer composed of large and small subunits.

It is found in the cytoplasm. The catalysed reaction is Exonucleolytic cleavage in either 5'- to 3'- or 3'- to 5'-direction to yield nucleoside 5'-phosphates.. Its function is as follows. Bidirectionally degrades single-stranded DNA into large acid-insoluble oligonucleotides, which are then degraded further into small acid-soluble oligonucleotides. The polypeptide is Exodeoxyribonuclease 7 small subunit (Geotalea uraniireducens (strain Rf4) (Geobacter uraniireducens)).